A 498-amino-acid chain; its full sequence is Cytochrome P450 monooxygenase 110 (498 aa).

The chain crosses the membrane as a helical span at residues 7-24 (YVFALLGILATLYFVRWS). Residue N425 is glycosylated (N-linked (GlcNAc...) asparagine). Residue C440 participates in heme binding.

This sequence belongs to the cytochrome P450 family. Heme serves as cofactor.

It localises to the membrane. Its pathway is secondary metabolite biosynthesis. Functionally, cytochrome P450 monooxygenase that is able to use dehydroabietic acid and testosterone as substrates for oxidation, suggesting that the natural substrate(s) may be structurally related to steroid compounds. The polypeptide is Cytochrome P450 monooxygenase 110 (Postia placenta (strain ATCC 44394 / Madison 698-R) (Brown rot fungus)).